The chain runs to 284 residues: Tropomyosin (284 aa).

The stretch at 1–284 forms a coiled coil; the sequence is MDAIKKKMLA…DSTFAELAGY (284 aa). A disordered region spans residues 105–131; the sequence is RLQSATEKLEEASKAADESERGRKVLE.

This sequence belongs to the tropomyosin family. Homodimer.

Functionally, tropomyosin, in association with the troponin complex, plays a central role in the calcium dependent regulation of muscle contraction. The polypeptide is Tropomyosin (Cornu aspersum (Brown garden snail)).